The following is a 101-amino-acid chain: Urease subunit beta (101 aa).

It belongs to the urease beta subunit family. In terms of assembly, heterotrimer of UreA (gamma), UreB (beta) and UreC (alpha) subunits. Three heterotrimers associate to form the active enzyme.

The protein localises to the cytoplasm. The catalysed reaction is urea + 2 H2O + H(+) = hydrogencarbonate + 2 NH4(+). Its pathway is nitrogen metabolism; urea degradation; CO(2) and NH(3) from urea (urease route): step 1/1. The sequence is that of Urease subunit beta from Allorhizobium ampelinum (strain ATCC BAA-846 / DSM 112012 / S4) (Agrobacterium vitis (strain S4)).